The sequence spans 384 residues: MNAPTPAPSPADVIPAPVGLLAELTHRCPLRCPYCSNPLELDRRSAELDTQAWLRVLTEAAGLGVLHVHLSGGEPTARPDIVEITAKCAELGLYSNLITSGVGGALAKLDALYDAGLDHVQLSVQGVDAANAEKIGGLKNAQPQKMQFAARVTELGLPLTLNSVIHRGNIHEVPGFIDLAVKLGAKRLEVAHTQYYGWAYVNRAALMPDKAQVDESIRIVEAARERLKGQLVIDLVVPDYYAKYPKACAGGWGRKLMNVTPQGKVLPCHAAETIPGLEFWYVTDHALGDIWTKSPAFAAYRGTGWMKEPCRSCDRREKDWGGCRCQALALTGDAANTDPACSLSPLHAKMRDLAKEEAAENPPDYIYRSIGTNVQNPLSEKAPL.

The Radical SAM core domain maps to 14-226; sequence IPAPVGLLAE…IRIVEAARER (213 aa). 3 residues coordinate [4Fe-4S] cluster: cysteine 28, cysteine 32, and cysteine 35.

The protein belongs to the radical SAM superfamily. PqqE family. As to quaternary structure, interacts with PqqD. The interaction is necessary for activity of PqqE. [4Fe-4S] cluster serves as cofactor.

It carries out the reaction [PQQ precursor protein] + S-adenosyl-L-methionine = E-Y cross-linked-[PQQ precursor protein] + 5'-deoxyadenosine + L-methionine + H(+). The protein operates within cofactor biosynthesis; pyrroloquinoline quinone biosynthesis. Its function is as follows. Catalyzes the cross-linking of a glutamate residue and a tyrosine residue in the PqqA protein as part of the biosynthesis of pyrroloquinoline quinone (PQQ). The protein is PqqA peptide cyclase of Methylorubrum populi (strain ATCC BAA-705 / NCIMB 13946 / BJ001) (Methylobacterium populi).